Reading from the N-terminus, the 81-residue chain is Photosystem I iron-sulfur center (81 aa).

2 consecutive 4Fe-4S ferredoxin-type domains span residues 2 to 31 (SHSVKIYDTCIGCTHCVRACPTDVLEMIPW) and 39 to 68 (IASAPRTEDCVGCKRCESACPTDFLSVRVY). Cysteine 11, cysteine 14, cysteine 17, cysteine 21, cysteine 48, cysteine 51, cysteine 54, and cysteine 58 together coordinate [4Fe-4S] cluster.

In terms of assembly, the eukaryotic PSI reaction center is composed of at least 11 subunits. The cofactor is [4Fe-4S] cluster.

The protein resides in the plastid. Its subcellular location is the chloroplast thylakoid membrane. It carries out the reaction reduced [plastocyanin] + hnu + oxidized [2Fe-2S]-[ferredoxin] = oxidized [plastocyanin] + reduced [2Fe-2S]-[ferredoxin]. In terms of biological role, apoprotein for the two 4Fe-4S centers FA and FB of photosystem I (PSI); essential for photochemical activity. FB is the terminal electron acceptor of PSI, donating electrons to ferredoxin. The C-terminus interacts with PsaA/B/D and helps assemble the protein into the PSI complex. Required for binding of PsaD and PsaE to PSI. PSI is a plastocyanin-ferredoxin oxidoreductase, converting photonic excitation into a charge separation, which transfers an electron from the donor P700 chlorophyll pair to the spectroscopically characterized acceptors A0, A1, FX, FA and FB in turn. This chain is Photosystem I iron-sulfur center, found in Zea mays (Maize).